Reading from the N-terminus, the 223-residue chain is Urease accessory protein UreG (223 aa).

Residues 1 to 31 (MAKHSHDHTHDHHDRPRRVRKPGEPLRIGVG) are disordered. 32-39 (GPVGSGKT) provides a ligand contact to GTP.

This sequence belongs to the SIMIBI class G3E GTPase family. UreG subfamily. As to quaternary structure, homodimer. UreD, UreF and UreG form a complex that acts as a GTP-hydrolysis-dependent molecular chaperone, activating the urease apoprotein by helping to assemble the nickel containing metallocenter of UreC. The UreE protein probably delivers the nickel.

It is found in the cytoplasm. Functionally, facilitates the functional incorporation of the urease nickel metallocenter. This process requires GTP hydrolysis, probably effectuated by UreG. The protein is Urease accessory protein UreG of Mycobacterium marinum (strain ATCC BAA-535 / M).